A 246-amino-acid polypeptide reads, in one-letter code: Pyruvate formate-lyase 1-activating enzyme (246 aa).

The 224-residue stretch at 16–239 (VDGPGIRFIT…MERVKGILEQ (224 aa)) folds into the Radical SAM core domain. Cys-30, Cys-34, and Cys-37 together coordinate [4Fe-4S] cluster. S-adenosyl-L-methionine contacts are provided by residues 36-38 (YCH), Gly-79, 130-132 (DLK), and His-203.

Belongs to the organic radical-activating enzymes family. It depends on [4Fe-4S] cluster as a cofactor.

It localises to the cytoplasm. It carries out the reaction glycyl-[formate C-acetyltransferase] + reduced [flavodoxin] + S-adenosyl-L-methionine = glycin-2-yl radical-[formate C-acetyltransferase] + semiquinone [flavodoxin] + 5'-deoxyadenosine + L-methionine + H(+). Its function is as follows. Activation of pyruvate formate-lyase 1 under anaerobic conditions by generation of an organic free radical, using S-adenosylmethionine and reduced flavodoxin as cosubstrates to produce 5'-deoxy-adenosine. This chain is Pyruvate formate-lyase 1-activating enzyme (pflA), found in Escherichia coli O157:H7.